Reading from the N-terminus, the 352-residue chain is Heat-inducible transcription repressor HrcA (352 aa).

Belongs to the HrcA family.

Its function is as follows. Negative regulator of class I heat shock genes (grpE-dnaK-dnaJ and groELS operons). Prevents heat-shock induction of these operons. This Latilactobacillus sakei subsp. sakei (strain 23K) (Lactobacillus sakei subsp. sakei) protein is Heat-inducible transcription repressor HrcA.